The following is a 155-amino-acid chain: Transcriptional repressor NrdR (155 aa).

Residues 1 to 10 are compositionally biased toward basic residues; it reads MQCPHCHHNS. The segment at 1–21 is disordered; the sequence is MQCPHCHHNSSRVVDSRPTDG. A zinc finger lies at 3 to 34; sequence CPHCHHNSSRVVDSRPTDGGRAIRRRRECENC. An ATP-cone domain is found at 49 to 139; the sequence is LLVIKKNGTR…VYRQFKDMSV (91 aa).

This sequence belongs to the NrdR family. Requires Zn(2+) as cofactor.

In terms of biological role, negatively regulates transcription of bacterial ribonucleotide reductase nrd genes and operons by binding to NrdR-boxes. The polypeptide is Transcriptional repressor NrdR (Lacticaseibacillus casei (strain BL23) (Lactobacillus casei)).